We begin with the raw amino-acid sequence, 163 residues long: Transcription antitermination protein NusB (163 aa).

Belongs to the NusB family.

In terms of biological role, involved in transcription antitermination. Required for transcription of ribosomal RNA (rRNA) genes. Binds specifically to the boxA antiterminator sequence of the ribosomal RNA (rrn) operons. The polypeptide is Transcription antitermination protein NusB (Mycolicibacterium vanbaalenii (strain DSM 7251 / JCM 13017 / BCRC 16820 / KCTC 9966 / NRRL B-24157 / PYR-1) (Mycobacterium vanbaalenii)).